The following is a 257-amino-acid chain: DNA repair protein RecO (257 aa).

It belongs to the RecO family.

Functionally, involved in DNA repair and RecF pathway recombination. This Streptococcus thermophilus (strain ATCC BAA-491 / LMD-9) protein is DNA repair protein RecO.